We begin with the raw amino-acid sequence, 305 residues long: Sulfate adenylyltransferase subunit 2 (305 aa).

This sequence belongs to the PAPS reductase family. CysD subfamily. Heterodimer composed of CysD, the smaller subunit, and CysN.

The catalysed reaction is sulfate + ATP + H(+) = adenosine 5'-phosphosulfate + diphosphate. It functions in the pathway sulfur metabolism; hydrogen sulfide biosynthesis; sulfite from sulfate: step 1/3. Its function is as follows. With CysN forms the ATP sulfurylase (ATPS) that catalyzes the adenylation of sulfate producing adenosine 5'-phosphosulfate (APS) and diphosphate, the first enzymatic step in sulfur assimilation pathway. APS synthesis involves the formation of a high-energy phosphoric-sulfuric acid anhydride bond driven by GTP hydrolysis by CysN coupled to ATP hydrolysis by CysD. The protein is Sulfate adenylyltransferase subunit 2 of Myxococcus xanthus (strain DK1622).